Here is a 376-residue protein sequence, read N- to C-terminus: cAMP-dependent protein kinase type I regulatory subunit (376 aa).

Residues 1-131 (MSYMMAKTLE…ALSKAIAKNV (131 aa)) form a dimerization and phosphorylation region. Residues 72–93 (PDDCEDLSPMPQTAAPPVRRRG) form a disordered region. Positions 91–95 (RRGGI) match the Pseudophosphorylation motif motif. A Phosphoserine modification is found at serine 96. 3',5'-cyclic AMP-binding positions include 132-247 (LFAH…FLSR), glutamate 197, arginine 206, 250-371 (ILES…YNSF), glutamate 321, and arginine 330.

The protein belongs to the cAMP-dependent kinase regulatory chain family. Tetramer, composed of 2 regulatory (R) and 2 catalytic (C) subunits. In the presence of cAMP it dissociates into 2 active monomeric C subunits and an R dimer. In terms of processing, the pseudophosphorylation site binds to the substrate-binding region of the catalytic chain but is not phosphorylated. The physiological significance of phosphorylations by other kinases is unclear.

The polypeptide is cAMP-dependent protein kinase type I regulatory subunit (Pka-R1) (Drosophila melanogaster (Fruit fly)).